We begin with the raw amino-acid sequence, 297 residues long: tRNA dimethylallyltransferase (297 aa).

10–17 contacts ATP; that stretch reads GITASGKS. 12–17 serves as a coordination point for substrate; the sequence is TASGKS. Residues 36–39 are interaction with substrate tRNA; sequence DSKQ.

It belongs to the IPP transferase family. As to quaternary structure, monomer. The cofactor is Mg(2+).

It catalyses the reaction adenosine(37) in tRNA + dimethylallyl diphosphate = N(6)-dimethylallyladenosine(37) in tRNA + diphosphate. Functionally, catalyzes the transfer of a dimethylallyl group onto the adenine at position 37 in tRNAs that read codons beginning with uridine, leading to the formation of N6-(dimethylallyl)adenosine (i(6)A). This is tRNA dimethylallyltransferase from Wolbachia sp. subsp. Brugia malayi (strain TRS).